We begin with the raw amino-acid sequence, 61 residues long: Probable tautomerase LL0574 (61 aa).

The Proton acceptor; via imino nitrogen role is filled by P2.

Belongs to the 4-oxalocrotonate tautomerase family.

This chain is Probable tautomerase LL0574, found in Lactococcus lactis subsp. lactis (strain IL1403) (Streptococcus lactis).